A 745-amino-acid chain; its full sequence is Phosphoribosylformylglycinamidine synthase subunit PurL (745 aa).

The active site involves His47. Residues Tyr50 and Lys90 each coordinate ATP. Glu92 serves as a coordination point for Mg(2+). Residues 93–96 (SHNH) and Arg115 contribute to the substrate site. His94 serves as the catalytic Proton acceptor. Asp116 serves as a coordination point for Mg(2+). Gln240 contacts substrate. Asp268 is a binding site for Mg(2+). Substrate is bound at residue 312–314 (ESQ). ATP contacts are provided by Asn501 and Gly538. Asn539 serves as a coordination point for Mg(2+). Ser541 is a substrate binding site.

Belongs to the FGAMS family. Monomer. Part of the FGAM synthase complex composed of 1 PurL, 1 PurQ and 2 PurS subunits.

Its subcellular location is the cytoplasm. It carries out the reaction N(2)-formyl-N(1)-(5-phospho-beta-D-ribosyl)glycinamide + L-glutamine + ATP + H2O = 2-formamido-N(1)-(5-O-phospho-beta-D-ribosyl)acetamidine + L-glutamate + ADP + phosphate + H(+). It functions in the pathway purine metabolism; IMP biosynthesis via de novo pathway; 5-amino-1-(5-phospho-D-ribosyl)imidazole from N(2)-formyl-N(1)-(5-phospho-D-ribosyl)glycinamide: step 1/2. Functionally, part of the phosphoribosylformylglycinamidine synthase complex involved in the purines biosynthetic pathway. Catalyzes the ATP-dependent conversion of formylglycinamide ribonucleotide (FGAR) and glutamine to yield formylglycinamidine ribonucleotide (FGAM) and glutamate. The FGAM synthase complex is composed of three subunits. PurQ produces an ammonia molecule by converting glutamine to glutamate. PurL transfers the ammonia molecule to FGAR to form FGAM in an ATP-dependent manner. PurS interacts with PurQ and PurL and is thought to assist in the transfer of the ammonia molecule from PurQ to PurL. The polypeptide is Phosphoribosylformylglycinamidine synthase subunit PurL (Leptospira borgpetersenii serovar Hardjo-bovis (strain JB197)).